Here is a 376-residue protein sequence, read N- to C-terminus: Probable plastid-lipid-associated protein 3, chloroplastic (376 aa).

The transit peptide at 1–53 directs the protein to the chloroplast; that stretch reads MATLFTVARPSSLLYVSSINPSKTFSPSISLKLNSLSFSFGYRPKPLRFSKIR. A disordered region spans residues 54-146; that stretch reads SSLPSESESE…EADAGNGSAV (93 aa). Residues 85 to 96 are compositionally biased toward polar residues; sequence PDSQPDNVTVNV. Positions 117-126 are enriched in basic and acidic residues; the sequence is MESDPPRNED.

This sequence belongs to the PAP/fibrillin family.

Its subcellular location is the plastid. It is found in the chloroplast. It localises to the plastoglobule. Its function is as follows. Probably involved in light/cold stress-related jasmonate (JA) biosynthesis. This is Probable plastid-lipid-associated protein 3, chloroplastic (PAP3) from Arabidopsis thaliana (Mouse-ear cress).